The following is a 150-amino-acid chain: Suppressor of HU sensitivity involved in recombination protein 1 (150 aa).

Component of the SHU complex composed of at least CSM2, PSY3, SHU1 and SHU2.

It localises to the nucleus. Its function is as follows. Plays a role in a RAD51/RAD54-dependent homologous recombination repair (HRR) pathway to repair MMS-induced lesions during S-phase. In Saccharomyces cerevisiae (strain ATCC 204508 / S288c) (Baker's yeast), this protein is Suppressor of HU sensitivity involved in recombination protein 1 (SHU1).